The sequence spans 249 residues: 2,3-bisphosphoglycerate-dependent phosphoglycerate mutase (249 aa).

Substrate contacts are provided by residues 9 to 16 (RHGQSQWN), 22 to 23 (TG), Arg-61, 88 to 91 (ERHY), Lys-99, 115 to 116 (RR), and 184 to 185 (GN). His-10 functions as the Tele-phosphohistidine intermediate in the catalytic mechanism. Catalysis depends on Glu-88, which acts as the Proton donor/acceptor.

It belongs to the phosphoglycerate mutase family. BPG-dependent PGAM subfamily. In terms of assembly, homodimer.

The catalysed reaction is (2R)-2-phosphoglycerate = (2R)-3-phosphoglycerate. Its pathway is carbohydrate degradation; glycolysis; pyruvate from D-glyceraldehyde 3-phosphate: step 3/5. Catalyzes the interconversion of 2-phosphoglycerate and 3-phosphoglycerate. This Xanthomonas euvesicatoria pv. vesicatoria (strain 85-10) (Xanthomonas campestris pv. vesicatoria) protein is 2,3-bisphosphoglycerate-dependent phosphoglycerate mutase.